A 429-amino-acid chain; its full sequence is Adenosylmethionine-8-amino-7-oxononanoate aminotransferase (429 aa).

Tryptophan 52 contributes to the substrate binding site. 112-113 (GS) contributes to the pyridoxal 5'-phosphate binding site. Tyrosine 144 serves as a coordination point for substrate. Aspartate 245 is a binding site for pyridoxal 5'-phosphate. Substrate-binding residues include lysine 274 and glycine 307. Lysine 274 carries the N6-(pyridoxal phosphate)lysine modification. 308-309 (PT) serves as a coordination point for pyridoxal 5'-phosphate. Arginine 391 is a substrate binding site.

The protein belongs to the class-III pyridoxal-phosphate-dependent aminotransferase family. BioA subfamily. Homodimer. Pyridoxal 5'-phosphate is required as a cofactor.

The protein localises to the cytoplasm. The enzyme catalyses (8S)-8-amino-7-oxononanoate + S-adenosyl-L-methionine = S-adenosyl-4-methylsulfanyl-2-oxobutanoate + (7R,8S)-7,8-diammoniononanoate. It participates in cofactor biosynthesis; biotin biosynthesis; 7,8-diaminononanoate from 8-amino-7-oxononanoate (SAM route): step 1/1. Functionally, catalyzes the transfer of the alpha-amino group from S-adenosyl-L-methionine (SAM) to 7-keto-8-aminopelargonic acid (KAPA) to form 7,8-diaminopelargonic acid (DAPA). It is the only aminotransferase known to utilize SAM as an amino donor. The polypeptide is Adenosylmethionine-8-amino-7-oxononanoate aminotransferase (Buchnera aphidicola subsp. Baizongia pistaciae (strain Bp)).